A 204-amino-acid polypeptide reads, in one-letter code: ATP-dependent Clp protease proteolytic subunit 1 (204 aa).

The active-site Nucleophile is Ser-97. The active site involves His-122.

This sequence belongs to the peptidase S14 family. As to quaternary structure, fourteen ClpP subunits assemble into 2 heptameric rings which stack back to back to give a disk-like structure with a central cavity, resembling the structure of eukaryotic proteasomes.

It is found in the cytoplasm. The enzyme catalyses Hydrolysis of proteins to small peptides in the presence of ATP and magnesium. alpha-casein is the usual test substrate. In the absence of ATP, only oligopeptides shorter than five residues are hydrolyzed (such as succinyl-Leu-Tyr-|-NHMec, and Leu-Tyr-Leu-|-Tyr-Trp, in which cleavage of the -Tyr-|-Leu- and -Tyr-|-Trp bonds also occurs).. In terms of biological role, cleaves peptides in various proteins in a process that requires ATP hydrolysis. Has a chymotrypsin-like activity. Plays a major role in the degradation of misfolded proteins. The protein is ATP-dependent Clp protease proteolytic subunit 1 of Trichormus variabilis (strain ATCC 29413 / PCC 7937) (Anabaena variabilis).